A 265-amino-acid polypeptide reads, in one-letter code: Speedy protein E8 (265 aa).

A disordered region spans residues Met1–Pro80. Acidic residues predominate over residues Asp66 to Pro80.

The protein belongs to the Speedy/Ringo family.

This is Speedy protein E8 from Homo sapiens (Human).